Reading from the N-terminus, the 518-residue chain is Serine hydroxymethyltransferase, mitochondrial (518 aa).

A mitochondrion-targeting transit peptide spans 1–31 (MAMAMALRKLSSSVNKSSRPLFSASSLYYKS). Position 287 is an N6-(pyridoxal phosphate)lysine (Lys287).

The protein belongs to the SHMT family. As to quaternary structure, homotetramer. It depends on pyridoxal 5'-phosphate as a cofactor.

It localises to the mitochondrion. It carries out the reaction (6R)-5,10-methylene-5,6,7,8-tetrahydrofolate + glycine + H2O = (6S)-5,6,7,8-tetrahydrofolate + L-serine. The protein operates within one-carbon metabolism; tetrahydrofolate interconversion. In terms of biological role, catalyzes the interconversion of serine and glycine. The sequence is that of Serine hydroxymethyltransferase, mitochondrial from Pisum sativum (Garden pea).